The chain runs to 159 residues: Ascorbate-specific PTS system EIIA component (159 aa).

Residues 9–152 enclose the PTS EIIA type-2 domain; the sequence is VLKQHHTVRL…TSLFAVIDRV (144 aa). His-71 (tele-phosphohistidine intermediate) is an active-site residue. A Phosphohistidine modification is found at His-71.

It is found in the cytoplasm. Its function is as follows. The phosphoenolpyruvate-dependent sugar phosphotransferase system (sugar PTS), a major carbohydrate active transport system, catalyzes the phosphorylation of incoming sugar substrates concomitantly with their translocation across the cell membrane. The enzyme II UlaABC PTS system is involved in ascorbate transport. The polypeptide is Ascorbate-specific PTS system EIIA component (ulaC) (Mycoplasma pneumoniae (strain ATCC 29342 / M129 / Subtype 1) (Mycoplasmoides pneumoniae)).